The sequence spans 172 residues: Large ribosomal subunit protein uL10 (172 aa).

This sequence belongs to the universal ribosomal protein uL10 family. In terms of assembly, part of the ribosomal stalk of the 50S ribosomal subunit. The N-terminus interacts with L11 and the large rRNA to form the base of the stalk. The C-terminus forms an elongated spine to which L12 dimers bind in a sequential fashion forming a multimeric L10(L12)X complex.

In terms of biological role, forms part of the ribosomal stalk, playing a central role in the interaction of the ribosome with GTP-bound translation factors. In Brucella anthropi (strain ATCC 49188 / DSM 6882 / CCUG 24695 / JCM 21032 / LMG 3331 / NBRC 15819 / NCTC 12168 / Alc 37) (Ochrobactrum anthropi), this protein is Large ribosomal subunit protein uL10.